Reading from the N-terminus, the 855-residue chain is Vomeronasal type-2 receptor 26 (855 aa).

The N-terminal stretch at 1–22 (MKLLTAFSPLVVLILFQEQISC) is a signal peptide. Over 23–595 (YYLTKYASSG…FLAHEDPLGT (573 aa)) the chain is Extracellular. N-linked (GlcNAc...) asparagine glycosylation is found at asparagine 101 and asparagine 295. Residues 596–616 (VLVSLAISLSAFSAMILGLFI) form a helical membrane-spanning segment. Over 617–630 (CYRETPIVRANNRN) the chain is Cytoplasmic. The chain crosses the membrane as a helical span at residues 631–651 (LSYLLLISLKLCFSCSLMFIG). At 652 to 662 (QPRTVTCVLRQ) the chain is on the extracellular side. A helical membrane pass occupies residues 663–683 (IIFGIVFSIVISAILAKTFIV). The Cytoplasmic portion of the chain corresponds to 684–706 (VMAFKAIKPGSILKMGMVTRLSN). A helical membrane pass occupies residues 707–727 (AIVCCGSIIQVCICAVWLGTY). The Extracellular portion of the chain corresponds to 728 to 753 (PPFPDVDMHSEFGQIILWCNEGSTLA). The helical transmembrane segment at 754–774 (FYCVLGYLGFLASLSLLIAFL) threads the bilayer. Residues 775–786 (ARRLPDSFNEAK) lie on the Cytoplasmic side of the membrane. A helical transmembrane segment spans residues 787-807 (TITFSMLVFCSVWISFVPAYL). Residues 808–814 (SSKGKTM) are Extracellular-facing. A helical transmembrane segment spans residues 815–835 (VAVEILSILASSAGLLGCIFL). The Cytoplasmic segment spans residues 836–855 (PKCYVILLKSGGHSRKKFFK).

This sequence belongs to the G-protein coupled receptor 3 family. In terms of tissue distribution, expressed in the basal epithelium of the vomeronasal organ. Located to vomeronasal sensory neurons that project their axons to six to ten glomeruli that reside in globally conserved areas within the caudal accessory olfactory bulb (AOB).

The protein localises to the cell membrane. Putative pheromone receptor. The polypeptide is Vomeronasal type-2 receptor 26 (Vmn2r26) (Mus musculus (Mouse)).